The following is a 312-amino-acid chain: MTQSTPIRIATRKSPLALWQAHFVKDALQAAHPGLEVELVTMVTKGDIILDTPLAKVGGKGLFVKELEVAMLEGRADLAVHSMKDVPVDFPEGLGLVTICEREDPRDAFVSNTYNNIDELPQGAVVGTCSLRRQCQLKEYRPDLVIKELRGNVGTRLGKLDAGEYDAIILAAAGLKRLELEERIRSFIEPEQSLPAVGQGAVGIECRVDDERLLKLLEPLNHQDTADRVRCERAMNLTLEGGCQVPIGSYSLLDGDNIWLRALVGEPDGSLIVRGEIRGHRNDAEALGVQLANELLENGARDILTKLYADHE.

C243 is subject to S-(dipyrrolylmethanemethyl)cysteine.

Belongs to the HMBS family. As to quaternary structure, monomer. The cofactor is dipyrromethane.

It catalyses the reaction 4 porphobilinogen + H2O = hydroxymethylbilane + 4 NH4(+). Its pathway is porphyrin-containing compound metabolism; protoporphyrin-IX biosynthesis; coproporphyrinogen-III from 5-aminolevulinate: step 2/4. In terms of biological role, tetrapolymerization of the monopyrrole PBG into the hydroxymethylbilane pre-uroporphyrinogen in several discrete steps. The sequence is that of Porphobilinogen deaminase from Vibrio campbellii (strain ATCC BAA-1116).